Here is a 341-residue protein sequence, read N- to C-terminus: Methionine import ATP-binding protein MetN 2 (341 aa).

The 240-residue stretch at 2–241 folds into the ABC transporter domain; the sequence is IELKEVVKEY…PQHTVTKRFV (240 aa). 38–45 lines the ATP pocket; that stretch reads GFSGAGKS.

This sequence belongs to the ABC transporter superfamily. Methionine importer (TC 3.A.1.24) family. In terms of assembly, the complex is composed of two ATP-binding proteins (MetN), two transmembrane proteins (MetI) and a solute-binding protein (MetQ).

The protein localises to the cell membrane. The enzyme catalyses L-methionine(out) + ATP + H2O = L-methionine(in) + ADP + phosphate + H(+). It catalyses the reaction D-methionine(out) + ATP + H2O = D-methionine(in) + ADP + phosphate + H(+). Its function is as follows. Part of the ABC transporter complex MetNIQ involved in methionine import. Responsible for energy coupling to the transport system. In Staphylococcus aureus (strain USA300), this protein is Methionine import ATP-binding protein MetN 2.